The chain runs to 522 residues: Sorting nexin-1 (522 aa).

The disordered stretch occupies residues 1-142 (MASGGGGCSA…ELEEEEQEDQ (142 aa)). Phosphoserine occurs at positions 32 and 39. Positions 35–45 (EAGDSDTEGED) are enriched in acidic residues. Thr41 and Thr48 each carry phosphothreonine. Ser58 and Ser72 each carry phosphoserine. Positions 132–142 (EELEEEEQEDQ) are enriched in acidic residues. In terms of domain architecture, PX spans 143 to 272 (FDLTVGITDP…EFLEKEELPR (130 aa)). Residues Arg186, Ser188, and Lys214 each coordinate a 1,2-diacyl-sn-glycero-3-phospho-(1D-myo-inositol-3-phosphate). Ser188 is subject to Phosphoserine. An N6-acetyllysine modification is found at Lys237. Arg238 serves as a coordination point for a 1,2-diacyl-sn-glycero-3-phospho-(1D-myo-inositol-3-phosphate). The residue at position 280 (Ser280) is a Phosphoserine. A membrane-binding amphipathic helix region spans residues 281–298 (GAGLLKMFNKATDAVSKM). Residues 302 to 522 (MNESDIWFEE…AFLPEAKAIS (221 aa)) form the BAR domain.

It belongs to the sorting nexin family. As to quaternary structure, predominantly forms heterodimers with BAR domain-containing sorting nexins SNX5, SNX6 and SNX32; can self-associate to form homodimers. The heterodimers are proposed to self-assemble into helical arrays on the membrane to stabilize and expand local membrane curvature underlying endosomal tubule formation. Thought to be a component of the originally described retromer complex (also called SNX-BAR retromer) which is a pentamer containing the heterotrimeric retromer cargo-selective complex (CSC), also described as vacuolar protein sorting subcomplex (VPS) and a heterodimeric membrane-deforming subcomplex formed between SNX1 or SNX2 and SNX5 or SNX6 (also called SNX-BAR subcomplex); the respective CSC and SNX-BAR subcomplexes associate with low affinity. Interacts with SNX5, SNX6, SNX32, VPS26A, VPS29, VPS35, DRD5, DENND5A, KALRN, RHOG (GDP-bound form). The interaction with SNX2 is reported controversially. Interacts with DNAJC13; prevented by presence of HGS. Interacts with HGS.

It is found in the endosome membrane. The protein localises to the golgi apparatus. The protein resides in the trans-Golgi network membrane. Its subcellular location is the early endosome membrane. It localises to the cell projection. It is found in the lamellipodium. In terms of biological role, involved in several stages of intracellular trafficking. Interacts with membranes containing phosphatidylinositol 3-phosphate (PtdIns(3P)) or phosphatidylinositol 3,5-bisphosphate (PtdIns(3,5)P2). Acts in part as component of the retromer membrane-deforming SNX-BAR subcomplex. The SNX-BAR retromer mediates retrograde transport of cargo proteins from endosomes to the trans-Golgi network (TGN) and is involved in endosome-to-plasma membrane transport for cargo protein recycling. The SNX-BAR subcomplex functions to deform the donor membrane into a tubular profile called endosome-to-TGN transport carrier (ETC). Can sense membrane curvature and has in vitro vesicle-to-membrane remodeling activity. Involved in retrograde endosome-to-TGN transport of lysosomal enzyme receptors (IGF2R, M6PR and SORT1). Plays a role in targeting ligand-activated EGFR to the lysosomes for degradation after endocytosis from the cell surface and release from the Golgi. Involvement in retromer-independent endocytic trafficking of P2RY1 and lysosomal degradation of protease-activated receptor-1/F2R. Promotes KALRN- and RHOG-dependent but retromer-independent membrane remodeling such as lamellipodium formation; the function is dependent on GEF activity of KALRN. Required for endocytosis of DRD5 upon agonist stimulation but not for basal receptor trafficking. The sequence is that of Sorting nexin-1 (SNX1) from Bos taurus (Bovine).